Reading from the N-terminus, the 235-residue chain is MTASTDAIDSVLLDIEGTTIPVAFVHQVLFPYARAAMPGLLAQRADDPAVRAAVADIAALAPGVPPLDQLNAWMDRDEKIGPLKALQGLAWEEGYRTGALRATLYPDVVPALRRWRAAGLRLAVYSSGSEAAQRLIYGHTTDGDVAGLFSGFYDLRIGGKRAAGSYRAILAETGWAAGRTLFLSDITAELDAAEEAGLRTCQLVRPEDGTVAGDRHPVATTLDDVARRFALPVAA.

Belongs to the HAD-like hydrolase superfamily. MasA/MtnC family. As to quaternary structure, monomer. Requires Mg(2+) as cofactor.

The catalysed reaction is 5-methylsulfanyl-2,3-dioxopentyl phosphate + H2O = 1,2-dihydroxy-5-(methylsulfanyl)pent-1-en-3-one + phosphate. It participates in amino-acid biosynthesis; L-methionine biosynthesis via salvage pathway; L-methionine from S-methyl-5-thio-alpha-D-ribose 1-phosphate: step 3/6. Its pathway is amino-acid biosynthesis; L-methionine biosynthesis via salvage pathway; L-methionine from S-methyl-5-thio-alpha-D-ribose 1-phosphate: step 4/6. Bifunctional enzyme that catalyzes the enolization of 2,3-diketo-5-methylthiopentyl-1-phosphate (DK-MTP-1-P) into the intermediate 2-hydroxy-3-keto-5-methylthiopentenyl-1-phosphate (HK-MTPenyl-1-P), which is then dephosphorylated to form the acireductone 1,2-dihydroxy-3-keto-5-methylthiopentene (DHK-MTPene). This is Enolase-phosphatase E1 from Gluconacetobacter diazotrophicus (strain ATCC 49037 / DSM 5601 / CCUG 37298 / CIP 103539 / LMG 7603 / PAl5).